We begin with the raw amino-acid sequence, 223 residues long: Imidazoleglycerol-phosphate dehydratase (223 aa).

Belongs to the imidazoleglycerol-phosphate dehydratase family.

It catalyses the reaction D-erythro-1-(imidazol-4-yl)glycerol 3-phosphate = 3-(imidazol-4-yl)-2-oxopropyl phosphate + H2O. The protein operates within amino-acid biosynthesis; L-histidine biosynthesis; L-histidine from 5-phospho-alpha-D-ribose 1-diphosphate: step 6/9. This chain is Imidazoleglycerol-phosphate dehydratase (HIS3), found in Zygosaccharomyces bailii.